A 129-amino-acid polypeptide reads, in one-letter code: Flagellar assembly factor FliW (129 aa).

It belongs to the FliW family. As to quaternary structure, interacts with translational regulator CsrA and flagellin(s).

The protein localises to the cytoplasm. Acts as an anti-CsrA protein, binds CsrA and prevents it from repressing translation of its target genes, one of which is flagellin. Binds to flagellin and participates in the assembly of the flagellum. The sequence is that of Flagellar assembly factor FliW from Campylobacter jejuni subsp. doylei (strain ATCC BAA-1458 / RM4099 / 269.97).